A 569-amino-acid polypeptide reads, in one-letter code: CTP synthase (569 aa).

One can recognise a Glutamine amidotransferase type-1 domain in the interval 313 to 569 (RIAMVGKYTG…NASLERLKKM (257 aa)). Cys410 functions as the Nucleophile in the catalytic mechanism. Active-site residues include His541 and Glu543.

Belongs to the CTP synthase family.

The catalysed reaction is UTP + L-glutamine + ATP + H2O = CTP + L-glutamate + ADP + phosphate + 2 H(+). Its pathway is pyrimidine metabolism; CTP biosynthesis via de novo pathway; CTP from UDP: step 2/2. Its function is as follows. Catalyzes the ATP-dependent amination of UTP to CTP with either L-glutamine or ammonia as the source of nitrogen. The sequence is that of CTP synthase (ctps) from Dictyostelium discoideum (Social amoeba).